The chain runs to 137 residues: 3-hydroxyacyl-[acyl-carrier-protein] dehydratase FabZ (137 aa).

The active site involves His-46.

Belongs to the thioester dehydratase family. FabZ subfamily.

Its subcellular location is the cytoplasm. It catalyses the reaction a (3R)-hydroxyacyl-[ACP] = a (2E)-enoyl-[ACP] + H2O. Involved in unsaturated fatty acids biosynthesis. Catalyzes the dehydration of short chain beta-hydroxyacyl-ACPs and long chain saturated and unsaturated beta-hydroxyacyl-ACPs. This Thermotoga maritima (strain ATCC 43589 / DSM 3109 / JCM 10099 / NBRC 100826 / MSB8) protein is 3-hydroxyacyl-[acyl-carrier-protein] dehydratase FabZ.